A 938-amino-acid polypeptide reads, in one-letter code: Microperfuranone synthase (938 aa).

The segment at 44–445 (TSTRISYAEL…AGRTKDTIIV (402 aa)) is adenylation (A) domain. The Carrier domain maps to 579–655 (SDSERAVQKA…AIARSIDSSR (77 aa)). Positions 581 to 652 (SERAVQKALV…TPGAIARSID (72 aa)) are thiolation and peptide carrier (T) domain. The residue at position 613 (Ser613) is an O-(pantetheine 4'-phosphoryl)serine. Residues 676 to 923 (PLFCIHPGSG…AKMLNREHIA (248 aa)) are thioesterase (TE) domain. Ser746 is a catalytic residue.

This sequence belongs to the ATP-dependent AMP-binding enzyme family.

Its pathway is secondary metabolite biosynthesis. Its function is as follows. Microperfuranone synthase is the only protein required for the biosynthesis of the secondary metabolite microperfuranone from phenylpyruvic acid (PPA). Several steps for the microperfuranione biosynthesis have been proposed. These steps include the activation of PPA, by the micA adenylation (A) domain to AMP-phenylpyruvic acid followed by loading of the PPA unit to the thiolation and peptide carrier (T) domain and eventually transferring to the thioesterase (TE) domain. After loading another PPA unit onto the T domain, aldol condensation establishes the carbon-carbon bond between the alpha- and beta-carbon of the two PPA units. Sulfur-assisted furan ring formation, TE domain mediated hydrolysis, decarboxylation, and keto-enol tautomerization would generate microperfuranone attached to the T domain. Finally, microperfuranone is released by the TE domain. This is Microperfuranone synthase from Emericella nidulans (strain FGSC A4 / ATCC 38163 / CBS 112.46 / NRRL 194 / M139) (Aspergillus nidulans).